The following is a 512-amino-acid chain: UDP-N-acetylmuramoyl-L-alanyl-D-glutamate--2,6-diaminopimelate ligase (512 aa).

A UDP-N-acetyl-alpha-D-muramoyl-L-alanyl-D-glutamate-binding site is contributed by S32. Residue 114-120 coordinates ATP; that stretch reads GTNGKTT. Residues 156–157, S183, and R191 each bind UDP-N-acetyl-alpha-D-muramoyl-L-alanyl-D-glutamate; that span reads TT. K223 bears the N6-carboxylysine mark. Meso-2,6-diaminopimelate contacts are provided by residues R395, 419–422, G469, and E473; that span reads DNPR. Residues 419 to 422 carry the Meso-diaminopimelate recognition motif motif; that stretch reads DNPR.

This sequence belongs to the MurCDEF family. MurE subfamily. It depends on Mg(2+) as a cofactor. Post-translationally, carboxylation is probably crucial for Mg(2+) binding and, consequently, for the gamma-phosphate positioning of ATP.

The protein resides in the cytoplasm. The catalysed reaction is UDP-N-acetyl-alpha-D-muramoyl-L-alanyl-D-glutamate + meso-2,6-diaminopimelate + ATP = UDP-N-acetyl-alpha-D-muramoyl-L-alanyl-gamma-D-glutamyl-meso-2,6-diaminopimelate + ADP + phosphate + H(+). It participates in cell wall biogenesis; peptidoglycan biosynthesis. Its function is as follows. Catalyzes the addition of meso-diaminopimelic acid to the nucleotide precursor UDP-N-acetylmuramoyl-L-alanyl-D-glutamate (UMAG) in the biosynthesis of bacterial cell-wall peptidoglycan. The sequence is that of UDP-N-acetylmuramoyl-L-alanyl-D-glutamate--2,6-diaminopimelate ligase from Chlorobium phaeobacteroides (strain DSM 266 / SMG 266 / 2430).